Consider the following 685-residue polypeptide: Polyphosphate kinase (685 aa).

Residue asparagine 45 coordinates ATP. Positions 375 and 405 each coordinate Mg(2+). The Phosphohistidine intermediate role is filled by histidine 435. ATP-binding residues include tyrosine 468, arginine 564, and histidine 592.

Belongs to the polyphosphate kinase 1 (PPK1) family. The cofactor is Mg(2+). In terms of processing, an intermediate of this reaction is the autophosphorylated ppk in which a phosphate is covalently linked to a histidine residue through a N-P bond.

It catalyses the reaction [phosphate](n) + ATP = [phosphate](n+1) + ADP. In terms of biological role, catalyzes the reversible transfer of the terminal phosphate of ATP to form a long-chain polyphosphate (polyP). The chain is Polyphosphate kinase from Neisseria gonorrhoeae (strain ATCC 700825 / FA 1090).